The following is an 87-amino-acid chain: Venom serine protease inhibitor (87 aa).

The N-terminal stretch at 1-23 (MPRLVLVSFLFLAIFSVFIGGFA) is a signal peptide. 5 disulfide bridges follow: Cys27/Cys61, Cys36/Cys57, Cys40/Cys53, Cys44/Cys81, and Cys63/Cys75. The TIL domain maps to 27 to 81 (CPRNEIFTRCHAACQPSCARLARKPFCIKICKPGCICTSGYLRNKNNVCVPRSRC).

The protein belongs to the serine protease inhibitor-like (TIL domain-containing) family. As to expression, specifically expressed by the venom gland.

Its subcellular location is the secreted. Functionally, antifibrinolytic and antimicrobial serine protease inhibitor. Inhibits trypsin, plasmin and microbial serine proteases but not chymotrypsin, thrombin and elastase. Inhibits the plasmin-mediated degradation of fibrin to fibrin degradation products. Also binds to bacterial and fungal surfaces and exhibits antimicrobial activity against fungi as well as Gram-positive and Gram-negative bacteria. The sequence is that of Venom serine protease inhibitor from Apis cerana (Indian honeybee).